A 68-amino-acid chain; its full sequence is uncharacterized protein (68 aa).

The interval 1–27 (MNEFEKWIEGRYEPHEQKQKEHEDTMG) is disordered.

This is an uncharacterized protein from Bacillus subtilis (strain 168).